The sequence spans 503 residues: Probable cytosol aminopeptidase (503 aa).

2 residues coordinate Mn(2+): lysine 268 and aspartate 273. Lysine 280 is an active-site residue. Residues aspartate 291, aspartate 350, and glutamate 352 each coordinate Mn(2+). Residue arginine 354 is part of the active site.

This sequence belongs to the peptidase M17 family. Mn(2+) serves as cofactor.

It localises to the cytoplasm. It catalyses the reaction Release of an N-terminal amino acid, Xaa-|-Yaa-, in which Xaa is preferably Leu, but may be other amino acids including Pro although not Arg or Lys, and Yaa may be Pro. Amino acid amides and methyl esters are also readily hydrolyzed, but rates on arylamides are exceedingly low.. The enzyme catalyses Release of an N-terminal amino acid, preferentially leucine, but not glutamic or aspartic acids.. Presumably involved in the processing and regular turnover of intracellular proteins. Catalyzes the removal of unsubstituted N-terminal amino acids from various peptides. The chain is Probable cytosol aminopeptidase from Methylobacterium radiotolerans (strain ATCC 27329 / DSM 1819 / JCM 2831 / NBRC 15690 / NCIMB 10815 / 0-1).